Reading from the N-terminus, the 1773-residue chain is Plexin-2 (1773 aa).

Positions 1-19 are cleaved as a signal peptide; sequence MLFIESAFLVLTSLSAAEA. The region spanning 20–436 is the Sema domain; it reads ATPFEGGVKQ…MPYGIVMEEL (417 aa). The Extracellular segment spans residues 20–1130; sequence ATPFEGGVKQ…SDHALPSRLS (1111 aa). Asn65 carries an N-linked (GlcNAc...) asparagine glycan. Cystine bridges form between Cys83-Cys90, Cys117-Cys125, Cys239-Cys341, Cys255-Cys292, Cys310-Cys328, Cys439-Cys456, Cys445-Cys479, Cys448-Cys465, and Cys459-Cys471. A glycan (N-linked (GlcNAc...) asparagine) is linked at Asn241. A PSI 1 domain is found at 438–480; it reads TCAHHESCTDCQVSVDPLCQWCHPTQSCTTSSRCSGPLTTQCP. Asn494 is a glycosylation site (N-linked (GlcNAc...) asparagine). Cys516 and Cys538 are disulfide-bonded. An N-linked (GlcNAc...) asparagine glycan is attached at Asn566. Positions 571-608 constitute a PSI 2 domain; it reads DCAGYSTCSTCMSSEFGCQWCSHKCSSSCGSASAKACV. N-linked (GlcNAc...) asparagine glycosylation is found at Asn670 and Asn693. In terms of domain architecture, PSI 3 spans 698–739; that stretch reads SCSNLAADCSSCLALSPSLSCGWCNRKCSHECHESKATAVCD. 3 IPT/TIG domains span residues 741–829, 831–916, and 919–1006; these read PKID…FSFV, VSIF…FEYR, and PSVN…FLMD. N-linked (GlcNAc...) asparagine glycosylation is found at Asn855, Asn877, Asn975, and Asn1007. Residues 1131-1151 form a helical membrane-spanning segment; sequence FLILGLLLFTVITLIVMCLIF. Residues 1150–1188 are a coiled coil; sequence IFKRRRQEREKEYRKIQLQMENLENNVRKECKQAFAELQ. Residues 1152–1764 are Cytoplasmic-facing; that stretch reads KRRRQEREKE…LHVCLETDNH (613 aa).

Belongs to the plexin family. Interacts with mab-20.

Its subcellular location is the cell membrane. Its function is as follows. Involved as a receptor for mab-20/sema-2a in the formation or stabilization of cell-cell contacts at several stages of epithelial morphogenesis. In early embryonic development, required for proper ventral closure of the epidermis. During male tail morphogenesis, involved in precursor cell sorting and in the formation of distinct sensory rays. Involved in axon guidance of SDQL neurons during neurogenesis. The polypeptide is Plexin-2 (plx-2) (Caenorhabditis briggsae).